The following is a 565-amino-acid chain: Nephrocystin-1 (565 aa).

Residues 1 to 32 show a composition bias toward acidic residues; that stretch reads GEEEDEEEEEEEESEEGGGEEEESEEEEEEKQ. Disordered regions lie at residues 1–46 and 95–132; these read GEEE…KEYI and VEPYNKEEGQDTSEEEDSEEDVEVGDQTAGGEEVKQRT. Positions 2 to 48 form a coiled coil; sequence EEEDEEEEEEEESEEGGGEEEESEEEEEEKQENESHHQATSKEYIAV. Residue Ser14 is modified to Phosphoserine. Residues 40-100 enclose the SH3 domain; that stretch reads ATSKEYIAVG…PRTYVEPYNK (61 aa). A compositionally biased stretch (acidic residues) spans 104-118; that stretch reads QDTSEEEDSEEDVEV. Tyr182 bears the Phosphotyrosine; by FAK2 mark. Tyr554 carries the post-translational modification Phosphotyrosine; by SRC.

It belongs to the nephrocystin-1 family. In terms of assembly, interacts with Crk-associated substrate BCAR1, NPHP4, PTK2B/PYK2 and tensin. Interacts with INVS and NPHP3. Interacts with AHI1 and TNK2. Interacts with NPHP4 in a complex containing NPHP1, NPHP4 and RPGRIP1L/NPHP8. Interacts with IQCB1; the interaction likely requires additional interactors. Interacts with KIF7. Interacts with ANKS3. Interacts with SPATA7. Interacts with FLNA. Expressed in renal cells (at protein level).

It is found in the cell junction. It localises to the adherens junction. The protein localises to the cell projection. The protein resides in the cilium. Its subcellular location is the cytoplasm. It is found in the cytoskeleton. It localises to the cilium axoneme. The protein localises to the tight junction. Together with BCAR1 it may play a role in the control of epithelial cell polarity. Involved in the organization of apical junctions in kidney cells together with NPHP4 and RPGRIP1L/NPHP8. Does not seem to be strictly required for ciliogenesis. Seems to help to recruit PTK2B/PYK2 to cell matrix adhesions, thereby initiating phosphorylation of PTK2B/PYK2 and PTK2B/PYK2-dependent signaling. May play a role in the regulation of intraflagellar transport (IFT) during cilia assembly. Required for normal retina development. In connecting photoreceptor cilia influences the movement of some IFT proteins such as IFT88 and WDR19. Involved in spermatogenesis. This chain is Nephrocystin-1 (NPHP1), found in Canis lupus familiaris (Dog).